The chain runs to 159 residues: Nucleotide-binding protein Psyr_4087 (159 aa).

It belongs to the YajQ family.

In terms of biological role, nucleotide-binding protein. This Pseudomonas syringae pv. syringae (strain B728a) protein is Nucleotide-binding protein Psyr_4087.